Reading from the N-terminus, the 681-residue chain is Sodium/glucose cotransporter 4 (681 aa).

Over 1 to 36 (MSKELAAMGPGASGDGVRTETAPHIALDSRVGLHAY) the chain is Extracellular. Residues 37-57 (DISVVVIYFVFVIAVGIWSSI) form a helical membrane-spanning segment. At 58 to 75 (RASRGTIGGYFLAGRSMS) the chain is on the cytoplasmic side. A helical membrane pass occupies residues 76 to 98 (WWPIGASLMSSNVGSGLFIGLAG). The Extracellular portion of the chain corresponds to 99–114 (TGAAGGLAVGGFEWNA). A helical transmembrane segment spans residues 115 to 135 (TWLLLALGWVFVPVYIAAGVV). At 136–157 (TMPQYLKKRFGGQRIQVYMSVL) the chain is on the cytoplasmic side. Residues 158 to 178 (SLILYIFTKISTDIFSGALFI) form a helical membrane-spanning segment. Residues 179 to 190 (QMALGWNLYLST) lie on the Extracellular side of the membrane. The chain crosses the membrane as a helical span at residues 191–211 (GILLVVTAVYTIAGGLMAVIY). Residues 212–217 (TDALQT) lie on the Cytoplasmic side of the membrane. A helical transmembrane segment spans residues 218-238 (VIMVGGALVLMFLGFQDVGWY). The Extracellular portion of the chain corresponds to 239–275 (PGLEQRYRQAIPNVTVPNTTCHLPRPDAFHILRDPVS). N-linked (GlcNAc...) asparagine glycosylation occurs at Asn251. A helical transmembrane segment spans residues 276–296 (GDIPWPGLIFGLTVLATWCWC). Over 297-317 (TDQVIVQRSLSAKSLSHAKGG) the chain is Cytoplasmic. Residues 318 to 338 (SVLGGYLKILPMFFIVMPGMI) traverse the membrane as a helical segment. The Extracellular segment spans residues 339–383 (SRALFPDEVGCVDPDVCQRICGARVGCSNIAYPKLVMALMPVGLR). A helical membrane pass occupies residues 384–406 (GLMIAVIMAALMSSLTSIFNSSS). Residues 407–427 (TLFTIDVWQRFRRKSTEQELM) are Cytoplasmic-facing. A helical transmembrane segment spans residues 428–448 (VVGRVFVVFLVVISILWIPII). Residues 449–459 (QSSNSGQLFDY) are Extracellular-facing. Residues 460–480 (IQAVTSYLAPPITALFLLAIF) form a helical membrane-spanning segment. Residues 481–487 (CKRVTEP) are Cytoplasmic-facing. The helical transmembrane segment at 488-508 (GAFWGLVFGLGVGLLRMILEF) threads the bilayer. Over 509–530 (SYPAPACGEVDRRPAVLKDFHY) the chain is Extracellular. Residues 531–551 (LYFAILLCGLTAIVIVIVSLC) form a helical membrane-spanning segment. The Cytoplasmic segment spans residues 552-660 (TTPIPEEQLT…SIEEEPLWRH (109 aa)). Basic and acidic residues predominate over residues 579 to 591 (AHESTPEISERPA). The disordered stretch occupies residues 579–614 (AHESTPEISERPAGECPAGGGAAENSSLGQEQPEAP). 2 positions are modified to phosphoserine: Ser604 and Ser605. Residues 661-681 (VCNINAVLLLAINIFLWGYFA) traverse the membrane as a helical segment.

Belongs to the sodium:solute symporter (SSF) (TC 2.A.21) family. As to expression, expressed in the small intestine, kidney and liver.

It is found in the cell membrane. The catalysed reaction is D-mannose(out) + n Na(+)(out) = D-mannose(in) + n Na(+)(in). Electrogenic Na(+)-coupled sugar symporter that may play a primary role in D-mannose and possibly D-fructose and D-glucose transport at the plasma membrane. Transporter activity is driven by a transmembrane Na(+) electrochemical gradient set by the Na(+)/K(+) pump. Exclusively recognizes sugar substrates having a pyranose ring with an axial hydroxyl group on carbon 2. The chain is Sodium/glucose cotransporter 4 from Homo sapiens (Human).